The following is a 419-amino-acid chain: Serine hydroxymethyltransferase (419 aa).

(6S)-5,6,7,8-tetrahydrofolate is bound by residues leucine 118 and 122–124 (GHL). At lysine 226 the chain carries N6-(pyridoxal phosphate)lysine. Residue glutamate 242 participates in (6S)-5,6,7,8-tetrahydrofolate binding.

Belongs to the SHMT family. As to quaternary structure, homodimer. Requires pyridoxal 5'-phosphate as cofactor.

Its subcellular location is the cytoplasm. The enzyme catalyses (6R)-5,10-methylene-5,6,7,8-tetrahydrofolate + glycine + H2O = (6S)-5,6,7,8-tetrahydrofolate + L-serine. It functions in the pathway one-carbon metabolism; tetrahydrofolate interconversion. It participates in amino-acid biosynthesis; glycine biosynthesis; glycine from L-serine: step 1/1. Its function is as follows. Catalyzes the reversible interconversion of serine and glycine with tetrahydrofolate (THF) serving as the one-carbon carrier. This reaction serves as the major source of one-carbon groups required for the biosynthesis of purines, thymidylate, methionine, and other important biomolecules. Also exhibits THF-independent aldolase activity toward beta-hydroxyamino acids, producing glycine and aldehydes, via a retro-aldol mechanism. The polypeptide is Serine hydroxymethyltransferase (Metamycoplasma arthritidis (strain 158L3-1) (Mycoplasma arthritidis)).